The sequence spans 1281 residues: Angiotensin-converting enzyme (1281 aa).

The N-terminal stretch at 1–17 (MPAALGLLLPWLSLVGA) is a signal peptide. Over 18–1241 (LQPGLEPPQS…MSVGTKQATA (1224 aa)) the chain is Extracellular. 2 consecutive Peptidase M2 domains span residues 28-610 (DPTE…LGWP) and 629-1208 (IVDE…LGWP). Asn42, Asn62, Asn80, Asn99, and Asn148 each carry an N-linked (GlcNAc...) asparagine glycan. The cysteines at positions 145 and 151 are disulfide-linked. Residue Tyr217 coordinates chloride. An N-linked (GlcNAc...) asparagine glycan is attached at Asn304. A disulfide bridge links Cys345 with Cys363. His376 serves as a coordination point for Zn(2+). Glu377 acts as the Proton acceptor 1 in catalysis. His380 and Glu404 together coordinate Zn(2+). A glycan (N-linked (GlcNAc...) asparagine) is linked at Asn495. Catalysis depends on His506, which acts as the Proton donor 1. Arg515 lines the chloride pocket. Cys531 and Cys543 are oxidised to a cystine. Residues Asn535, Asn573, Asn601, Asn643, Asn663, and Asn746 are each glycosylated (N-linked (GlcNAc...) asparagine). Residues Cys743 and Cys749 are joined by a disulfide bond. Residues Arg777 and Tyr815 each contribute to the chloride site. Cysteines 943 and 961 form a disulfide. Zn(2+) is bound at residue His974. Glu975 (proton acceptor 2) is an active-site residue. The Zn(2+) site is built by His978 and Glu1002. Trp1076 and Arg1080 together coordinate chloride. The active-site Proton donor 2 is His1104. Arg1113 contributes to the chloride binding site. Cys1129 and Cys1141 are disulfide-bonded. Residue Asn1177 is glycosylated (N-linked (GlcNAc...) asparagine). Residues 1201–1240 (NGEVLGWPEYSWTPYAVTEFHAATDTADFLGMSVGTKQAT) are juxtamembrane stalk. Residues 1242 to 1262 (GAWVLLALALVFLITSIFLGV) form a helical membrane-spanning segment. Residues 1263 to 1281 (KLFSSRRKAFKSSSEMELK) are Cytoplasmic-facing.

The protein belongs to the peptidase M2 family. Requires Zn(2+) as cofactor. The cofactor is chloride.

Its subcellular location is the cell membrane. The protein localises to the cytoplasm. The catalysed reaction is Release of a C-terminal dipeptide, oligopeptide-|-Xaa-Yaa, when Xaa is not Pro, and Yaa is neither Asp nor Glu. Thus, conversion of angiotensin I to angiotensin II, with increase in vasoconstrictor activity, but no action on angiotensin II.. The enzyme catalyses angiotensin I + H2O = L-histidyl-L-leucine + angiotensin II. It carries out the reaction bradykinin + H2O = L-Phe-L-Arg + bradykinin(1-7). It catalyses the reaction substance P + H2O = substance P(1-9) + L-Leu-L-Met-NH2. The catalysed reaction is substance P + H2O = substance P(1-8) + Gly-L-Leu-L-Met-NH2. The enzyme catalyses substance P + H2O = L-Phe-L-Phe-Gly-L-Leu-L-Met-NH2 + substance P(1-6). It carries out the reaction neurotensin + H2O = neurotensin(1-11) + L-isoleucyl-L-leucine. It catalyses the reaction goralatide + H2O = N-acetyl-L-seryl-L-aspartate + L-lysyl-L-proline. The catalysed reaction is Met-enkephalin + H2O = L-phenylalanyl-L-methionine + L-tyrosylglycylglycine. The enzyme catalyses Leu-enkephalin + H2O = L-tyrosylglycylglycine + L-phenylalanyl-L-leucine. It carries out the reaction Met-enkephalin-Arg-Phe + H2O = L-arginyl-L-phenylalanine + Met-enkephalin. Dipeptidyl carboxypeptidase that removes dipeptides from the C-terminus of a variety of circulating hormones, such as angiotensin I, bradykinin or enkephalins, thereby playing a key role in the regulation of blood pressure, electrolyte homeostasis or synaptic plasticity. Composed of two similar catalytic domains, each possessing a functional active site, with different selectivity for substrates. Plays a major role in the angiotensin-renin system that regulates blood pressure and sodium retention by the kidney by converting angiotensin I to angiotensin II, resulting in an increase of the vasoconstrictor activity of angiotensin. Also able to inactivate bradykinin, a potent vasodilator, and therefore enhance the blood pressure response. Acts as a regulator of synaptic transmission by mediating cleavage of neuropeptide hormones, such as substance P, neurotensin or enkephalins. Catalyzes degradation of different enkephalin neuropeptides (Met-enkephalin, Leu-enkephalin, Met-enkephalin-Arg-Phe and possibly Met-enkephalin-Arg-Gly-Leu). Also acts as a regulator of hematopoietic stem cell differentiation by mediating degradation of hemoregulatory peptide N-acetyl-SDKP (AcSDKP). This Gallus gallus (Chicken) protein is Angiotensin-converting enzyme.